The sequence spans 165 residues: Small ribosomal subunit protein eS10 (165 aa).

Phosphotyrosine is present on Y12. Residues 92-165 (ATLRRSRPET…FGRGRGQPPQ (74 aa)) are disordered. Residues 97–128 (SRPETGRPRPKGLEGERPARLTRGEADRDTYR) are compositionally biased toward basic and acidic residues. Residues K138 and K139 each participate in a glycyl lysine isopeptide (Lys-Gly) (interchain with G-Cter in ubiquitin) cross-link. Phosphoserine is present on S146. At R153 the chain carries Omega-N-methylarginine. Positions 154 to 165 (GGFGRGRGQPPQ) are enriched in gly residues. Residues R158 and R160 each carry the symmetric dimethylarginine modification.

Belongs to the eukaryotic ribosomal protein eS10 family. In terms of assembly, component of the small ribosomal subunit. The methylated form interacts with NPM1. Methylated by PRMT5. Methylation is necessary for its interaction with NPS1, its localization in the granular component (GC) region of the nucleolus, for the proper assembly of ribosomes, protein synthesis and optimal cell proliferation. In terms of processing, monoubiquitinated by ZNF598 when a ribosome has stalled during translation of poly(A) sequences, leading to preclude synthesis of a long poly-lysine tail and initiate the ribosome quality control (RQC) pathway to degrade the potentially detrimental aberrant nascent polypeptide. Deubiquitinated by OTUD3 and USP21, antagonizing ZNF598 activity. Deubiquitinated by OTUD1, antagonizing ZNF598 activity and stimulating formation of polysomes: deubiquitination by OTUD1 promotes stability and translation of a subset mRNAs with a high abundance of rare codons can limit the translation rate. Deubiquitinated by USP10.

The protein localises to the cytoplasm. The protein resides in the nucleus. Its subcellular location is the nucleolus. Component of the 40S ribosomal subunit. The ribosome is a large ribonucleoprotein complex responsible for the synthesis of proteins in the cell. This Oryctolagus cuniculus (Rabbit) protein is Small ribosomal subunit protein eS10 (RPS10).